An 835-amino-acid polypeptide reads, in one-letter code: Protein translocase subunit SecA (835 aa).

Residues Q85, 103–107 (GEGKT), and D492 contribute to the ATP site. A disordered region spans residues 788-807 (VQGEAVHPSSDGEEAKKKPV). Positions 819, 821, 830, and 831 each coordinate Zn(2+).

This sequence belongs to the SecA family. As to quaternary structure, monomer and homodimer. Part of the essential Sec protein translocation apparatus which comprises SecA, SecYEG and auxiliary proteins SecDF. Other proteins may also be involved. Zn(2+) is required as a cofactor.

It localises to the cell membrane. The protein resides in the cytoplasm. It catalyses the reaction ATP + H2O + cellular proteinSide 1 = ADP + phosphate + cellular proteinSide 2.. Functionally, part of the Sec protein translocase complex. Interacts with the SecYEG preprotein conducting channel. Has a central role in coupling the hydrolysis of ATP to the transfer of proteins into and across the cell membrane, serving as an ATP-driven molecular motor driving the stepwise translocation of polypeptide chains across the membrane. The sequence is that of Protein translocase subunit SecA from Bacillus cereus (strain ATCC 14579 / DSM 31 / CCUG 7414 / JCM 2152 / NBRC 15305 / NCIMB 9373 / NCTC 2599 / NRRL B-3711).